We begin with the raw amino-acid sequence, 132 residues long: ATP synthase epsilon chain (132 aa).

It belongs to the ATPase epsilon chain family. As to quaternary structure, F-type ATPases have 2 components, CF(1) - the catalytic core - and CF(0) - the membrane proton channel. CF(1) has five subunits: alpha(3), beta(3), gamma(1), delta(1), epsilon(1). CF(0) has three main subunits: a, b and c.

The protein resides in the cell inner membrane. Its function is as follows. Produces ATP from ADP in the presence of a proton gradient across the membrane. This is ATP synthase epsilon chain from Jannaschia sp. (strain CCS1).